Reading from the N-terminus, the 542-residue chain is CTP synthase (542 aa).

The interval 1 to 265 is amidoligase domain; sequence MARYVFITGG…DNEVLAAFGI (265 aa). CTP is bound at residue Ser-13. Ser-13 is a UTP binding site. ATP contacts are provided by residues 14-19 and Asp-71; that span reads SLGKGI. Mg(2+)-binding residues include Asp-71 and Glu-139. Residues 146–148, 186–191, and Lys-222 contribute to the CTP site; these read DIE and KTKPTQ. UTP contacts are provided by residues 186-191 and Lys-222; that span reads KTKPTQ. In terms of domain architecture, Glutamine amidotransferase type-1 spans 291 to 541; the sequence is TIAIVGKYTG…IEAALEQSRL (251 aa). An L-glutamine-binding site is contributed by Gly-353. Cys-380 serves as the catalytic Nucleophile; for glutamine hydrolysis. Residues 381 to 384, Glu-404, and Arg-469 contribute to the L-glutamine site; that span reads FGMQ. Active-site residues include His-514 and Glu-516.

This sequence belongs to the CTP synthase family. As to quaternary structure, homotetramer.

The enzyme catalyses UTP + L-glutamine + ATP + H2O = CTP + L-glutamate + ADP + phosphate + 2 H(+). It carries out the reaction L-glutamine + H2O = L-glutamate + NH4(+). It catalyses the reaction UTP + NH4(+) + ATP = CTP + ADP + phosphate + 2 H(+). The protein operates within pyrimidine metabolism; CTP biosynthesis via de novo pathway; CTP from UDP: step 2/2. Its activity is regulated as follows. Allosterically activated by GTP, when glutamine is the substrate; GTP has no effect on the reaction when ammonia is the substrate. The allosteric effector GTP functions by stabilizing the protein conformation that binds the tetrahedral intermediate(s) formed during glutamine hydrolysis. Inhibited by the product CTP, via allosteric rather than competitive inhibition. Its function is as follows. Catalyzes the ATP-dependent amination of UTP to CTP with either L-glutamine or ammonia as the source of nitrogen. Regulates intracellular CTP levels through interactions with the four ribonucleotide triphosphates. The sequence is that of CTP synthase from Sinorhizobium medicae (strain WSM419) (Ensifer medicae).